We begin with the raw amino-acid sequence, 1010 residues long: Collagen, type I, alpha 1b (1010 aa).

Residues 1-24 (SSGPPQPGPMGPMGPRGPPGPPGS) are compositionally biased toward pro residues. Residues 1–969 (SSGPPQPGPM…PDGTQKSPAR (969 aa)) are disordered. Residues 25-48 (SGPQGFTGPPGEPGEPGASGAMGS) show a composition bias toward low complexity. A compositionally biased stretch (basic and acidic residues) spans 58 to 72 (NGDDGEPGKPGRPGE). The span at 73-82 (RGAAGPQGAR) shows a compositional bias: low complexity. Residues 145–159 (GGPPGPTGPAGPPGF) show a composition bias toward pro residues. Composition is skewed to gly residues over residues 160 to 179 (PGGA…GNEG) and 203 to 212 (GTDGGPGAKG). Composition is skewed to low complexity over residues 213–268 (SPGA…PGPA) and 300–310 (ERGAPGARGFP). Residues 311–323 (GADGGAGGKGAPG) are compositionally biased toward gly residues. 2 stretches are compositionally biased toward low complexity: residues 324–343 (ERGA…PGSK) and 405–448 (PAGA…APGE). Composition is skewed to gly residues over residues 468–477 (GAPGLGGPTG), 486–495 (GAPGGLGAPG), and 519–528 (GGKGGDGAPG). Composition is skewed to low complexity over residues 559 to 568 (VAGPTGPRGA) and 581 to 596 (AGFA…PGAK). 2 stretches are compositionally biased toward gly residues: residues 609 to 618 (GAPGPGGPVG) and 633 to 642 (GARGGAGPPG). Low complexity-rich tracts occupy residues 643–662 (ATGF…AGAA), 679–701 (ETGA…SGEK), and 796–805 (APGAVGPSGK). The segment covering 834–847 (KGDRGEAGEAGDRG) has biased composition (basic and acidic residues). Over residues 872-900 (PAGASGPAGPRGPAGSNGAAGKDGMNGLP) the composition is skewed to low complexity. Pro residues predominate over residues 918-933 (AGPPGPPGPAGPPGPP). One can recognise a Fibrillar collagen NC1 domain in the interval 982-1010 (RLPLLDLAPMDVGAPDQEFGVEVGPVCFL).

It belongs to the fibrillar collagen family.

It localises to the secreted. The protein localises to the extracellular space. The protein resides in the extracellular matrix. This chain is Collagen, type I, alpha 1b, found in Epinephelus marginatus (Dusky grouper).